The sequence spans 138 residues: Putative pre-16S rRNA nuclease (138 aa).

The protein belongs to the YqgF nuclease family.

The protein localises to the cytoplasm. Functionally, could be a nuclease involved in processing of the 5'-end of pre-16S rRNA. In Mycoplasma genitalium (strain ATCC 33530 / DSM 19775 / NCTC 10195 / G37) (Mycoplasmoides genitalium), this protein is Putative pre-16S rRNA nuclease.